Reading from the N-terminus, the 98-residue chain is Large ribosomal subunit protein uL23 (98 aa).

It belongs to the universal ribosomal protein uL23 family. As to quaternary structure, part of the 50S ribosomal subunit. Contacts protein L29, and trigger factor when it is bound to the ribosome.

Its function is as follows. One of the early assembly proteins it binds 23S rRNA. One of the proteins that surrounds the polypeptide exit tunnel on the outside of the ribosome. Forms the main docking site for trigger factor binding to the ribosome. This is Large ribosomal subunit protein uL23 from Rickettsia prowazekii (strain Madrid E).